A 290-amino-acid chain; its full sequence is Glycine--tRNA ligase alpha subunit (290 aa).

Belongs to the class-II aminoacyl-tRNA synthetase family. Tetramer of two alpha and two beta subunits.

It is found in the cytoplasm. It carries out the reaction tRNA(Gly) + glycine + ATP = glycyl-tRNA(Gly) + AMP + diphosphate. The sequence is that of Glycine--tRNA ligase alpha subunit from Zymomonas mobilis subsp. mobilis (strain ATCC 31821 / ZM4 / CP4).